A 122-amino-acid polypeptide reads, in one-letter code: Large ribosomal subunit protein uL14 (122 aa).

It belongs to the universal ribosomal protein uL14 family. In terms of assembly, part of the 50S ribosomal subunit. Forms a cluster with proteins L3 and L19. In the 70S ribosome, L14 and L19 interact and together make contacts with the 16S rRNA in bridges B5 and B8.

Binds to 23S rRNA. Forms part of two intersubunit bridges in the 70S ribosome. The sequence is that of Large ribosomal subunit protein uL14 from Mycolicibacterium gilvum (strain PYR-GCK) (Mycobacterium gilvum (strain PYR-GCK)).